A 311-amino-acid chain; its full sequence is Serine/threonine-protein phosphatase PP1-1 (311 aa).

Asp53, His55, Asp82, and Asn114 together coordinate Mn(2+). Residue His115 is the Proton donor of the active site. Mn(2+)-binding residues include His164 and His238.

Belongs to the PPP phosphatase family. PP-6 (PP-V) subfamily. As to quaternary structure, inactivated in a complex with phosphatase methylesterase PPE1 (PP2Ai). Interacts with phosphatase 2A activator RRD1, which can reactivate PP2Ai by dissociating the catalytic subunit from the complex. Forms a ternary complex with RRD1-TAP42. The cofactor is Mn(2+).

The protein localises to the cytoplasm. The enzyme catalyses O-phospho-L-seryl-[protein] + H2O = L-seryl-[protein] + phosphate. The catalysed reaction is O-phospho-L-threonyl-[protein] + H2O = L-threonyl-[protein] + phosphate. Its function is as follows. Involved in the dephosphorylation of the large subunit of RNA polymerase II. Is required in late G1 for normal G1 cyclin expression, bud initiation and expression of certain genes that are periodically expressed during late G1. Associates with the SAP proteins in a cell cycle-dependent manner. In Saccharomyces cerevisiae (strain ATCC 204508 / S288c) (Baker's yeast), this protein is Serine/threonine-protein phosphatase PP1-1 (SIT4).